A 170-amino-acid polypeptide reads, in one-letter code: Ubiquitin-conjugating enzyme E2 2 (170 aa).

Residues 4–150 form the UBC core domain; the sequence is PARRRLMRDF…VKETVEKSWE (147 aa). The active-site Glycyl thioester intermediate is cysteine 88. The disordered stretch occupies residues 148–170; it reads SWEDDLKDMDDGDDDDDDDDDDD. A compositionally biased stretch (acidic residues) spans 152–170; it reads DLKDMDDGDDDDDDDDDDD.

Belongs to the ubiquitin-conjugating enzyme family.

The protein localises to the cytoplasm. It is found in the nucleus. The enzyme catalyses S-ubiquitinyl-[E1 ubiquitin-activating enzyme]-L-cysteine + [E2 ubiquitin-conjugating enzyme]-L-cysteine = [E1 ubiquitin-activating enzyme]-L-cysteine + S-ubiquitinyl-[E2 ubiquitin-conjugating enzyme]-L-cysteine.. Its pathway is protein modification; protein ubiquitination. Catalyzes the covalent attachment of ubiquitin to other proteins. Plays a role in transcription regulation by catalyzing the monoubiquitination of histone H2B to form H2BK123ub1. H2BK123ub1 gives a specific tag for epigenetic transcriptional activation and is also a prerequisite for H3K4me and H3K79me formation. Also involved in postreplication repair of UV-damaged DNA, in N-end rule-dependent protein degradation and in sporulation. The sequence is that of Ubiquitin-conjugating enzyme E2 2 (UBC2) from Eremothecium gossypii (strain ATCC 10895 / CBS 109.51 / FGSC 9923 / NRRL Y-1056) (Yeast).